The chain runs to 493 residues: MQSRIVGLAPAFSLFPNLNTPHKTFTFHQILVLIITFTAYASFHASRKPPSIVKSVLGPPSLNSSSIDNGWAPFNGTQGTKRLGELDLAFLSSYALGMYFAGHLGDRIDLRYFLVFGMMGSGILTLVFGLGYWMNVHTLGFYMSVQIVCGLFQSIGWPCVVSVVGNWCGKEKRGLIMGLWNSHTSVGNILGSVIASSVLDFGWGWSFVLPGVLVLVSGVVVFMFLVVSPNDLGFEELGKEIEIEMSLGENVEESLRKHEAEGAVLLENVDDSSFAIGFLEAWRLPGVAPYAFCLFFSKLVAYTFLYWLPYYLRHTAVAGVNLSHKTAGILSTVFDVGGVLGGISAGFISDKIKARALTSITFLALSIPALIMYRVYGSVSMFINIVLMFISGLLVNGPYALITTAVAADLGTQDSIKGNGRALATVTAIIDGTGSVGAALGPLLAGYISSRGWNSVFFMLIVSIFFAGLFLVRLAKSEINTMRSGELIASSVP.

12 helical membrane passes run 25–44 (FTFH…ASFH), 83–103 (LGEL…FAGH), 113–133 (FLVF…LGYW), 145–165 (VQIV…SVVG), 185–205 (SVGN…GWGW), 207–227 (FVLP…FLVV), 292–312 (FCLF…PYYL), 328–348 (GILS…AGFI), 352–372 (IKAR…ALIM), 375–395 (VYGS…GLLV), 428–448 (AIID…AGYI), and 452–472 (GWNS…LFLV).

It belongs to the major facilitator superfamily. Organophosphate:Pi antiporter (OPA) (TC 2.A.1.4) family.

The protein resides in the membrane. The sequence is that of Putative glycerol-3-phosphate transporter 5 from Arabidopsis thaliana (Mouse-ear cress).